The sequence spans 299 residues: Protoheme IX farnesyltransferase 1 (299 aa).

A run of 9 helical transmembrane segments spans residues 24 to 44, 46 to 66, 97 to 117, 118 to 138, 146 to 166, 170 to 190, 217 to 237, 239 to 259, and 278 to 298; these read VVALIVFCAVIGMFLASPGVP, AAVVVPATLGIALVAGAAAMV, LLVALAVGGMGLALLLACCNA, LTAWLTLGTFVGYAIVYTLLL, IVIGGASGAMPPVLGWTAVNG, AFALALFLIIYTWTPPHFWAL, LSIVLYGFLLTAVTLLPVALG, AGAIYLGAVLLLDGRLLFLAV, and IWYLTWLFAALLLDHYYLIPL.

The protein belongs to the UbiA prenyltransferase family. Protoheme IX farnesyltransferase subfamily.

The protein resides in the cell inner membrane. It carries out the reaction heme b + (2E,6E)-farnesyl diphosphate + H2O = Fe(II)-heme o + diphosphate. It participates in porphyrin-containing compound metabolism; heme O biosynthesis; heme O from protoheme: step 1/1. Its function is as follows. Converts heme B (protoheme IX) to heme O by substitution of the vinyl group on carbon 2 of heme B porphyrin ring with a hydroxyethyl farnesyl side group. The sequence is that of Protoheme IX farnesyltransferase 1 from Chromobacterium violaceum (strain ATCC 12472 / DSM 30191 / JCM 1249 / CCUG 213 / NBRC 12614 / NCIMB 9131 / NCTC 9757 / MK).